Reading from the N-terminus, the 154-residue chain is Ribonuclease H (154 aa).

Positions 1–142 constitute an RNase H type-1 domain; that stretch reads MLKQITLYTD…CDELARNAAL (142 aa). Residues aspartate 10, glutamate 48, aspartate 70, and aspartate 134 each contribute to the Mg(2+) site.

It belongs to the RNase H family. As to quaternary structure, monomer. It depends on Mg(2+) as a cofactor.

Its subcellular location is the cytoplasm. The catalysed reaction is Endonucleolytic cleavage to 5'-phosphomonoester.. In terms of biological role, endonuclease that specifically degrades the RNA of RNA-DNA hybrids. The polypeptide is Ribonuclease H (Tolumonas auensis (strain DSM 9187 / NBRC 110442 / TA 4)).